The primary structure comprises 85 residues: UPF0291 protein SP_1473 (85 aa).

The tract at residues 62–85 is disordered; sequence TPEKLRQVQREKGLHGRSLDDPNS.

This sequence belongs to the UPF0291 family.

It localises to the cytoplasm. The chain is UPF0291 protein SP_1473 from Streptococcus pneumoniae serotype 4 (strain ATCC BAA-334 / TIGR4).